The following is a 263-amino-acid chain: Peptidoglycan-N-acetylmuramic acid deacetylase PdaA (263 aa).

The N-terminal stretch at 1-23 (MKWMCSICCAAVLLAGGAAQAEA) is a signal peptide. Positions 66–247 (KTIYLTFDNG…DLKKQGYTFK (182 aa)) constitute a NodB homology domain. The active-site Proton acceptor is the Asp-73. A divalent metal cation-binding residues include His-124 and His-128. His-222 acts as the Proton donor in catalysis.

The protein belongs to the polysaccharide deacetylase family.

Functionally, catalyzes the deacetylation of N-acetylmuramic acid (MurNAc) residues in glycan strands of peptidoglycan, leading to the formation of muramic delta-lactam residues in spore cortex, after transpeptidation of deacetylated muramic acid residues. PdaA probably carries out both deacetylation and lactam ring formation and requires the product of CwlD activity on peptidoglycan as a substrate. Is required for germination. Cannot use chitin oligomer (hexa-N-acetylchitohexaose) as a substrate. This Bacillus subtilis (strain 168) protein is Peptidoglycan-N-acetylmuramic acid deacetylase PdaA (pdaA).